We begin with the raw amino-acid sequence, 390 residues long: E3 ubiquitin-protein ligase At4g11680 (390 aa).

A compositionally biased stretch (low complexity) spans 1–19 (MSSSSSTTTNTTTESDSSS). The interval 1-39 (MSSSSSTTTNTTTESDSSSLPTHIGRSNSDGIIDTTPFL) is disordered. 5 consecutive transmembrane segments (helical) span residues 109–129 (VVFLDILWNLAFVAIGVAVLI), 142–162 (VWVVGYGIQCWLHMACVCVEY), 212–232 (MFSFIWWIIGFYWVSAGGQTL), 244–264 (IIFLGFDVFFVVFCVALACVI), and 265–285 (GLAVCCCLPCIIAILYAVADQ). An RING-type; atypical zinc finger spans residues 338–379 (CCICLCEYEDGVELRELPCNHHFHCTCIDKWLHINSRCPLCK).

The protein resides in the membrane. The enzyme catalyses S-ubiquitinyl-[E2 ubiquitin-conjugating enzyme]-L-cysteine + [acceptor protein]-L-lysine = [E2 ubiquitin-conjugating enzyme]-L-cysteine + N(6)-ubiquitinyl-[acceptor protein]-L-lysine.. It participates in protein modification; protein ubiquitination. Mediates E2-dependent protein ubiquitination in vitro. This chain is E3 ubiquitin-protein ligase At4g11680, found in Arabidopsis thaliana (Mouse-ear cress).